We begin with the raw amino-acid sequence, 299 residues long: Sulfate adenylyltransferase subunit 2 (299 aa).

It belongs to the PAPS reductase family. CysD subfamily. Sulfate-activating enzymes, NodP and NodQ, may be physically associated.

It catalyses the reaction sulfate + ATP + H(+) = adenosine 5'-phosphosulfate + diphosphate. In terms of biological role, proposed to provide activated sulfate for transfer to nod factor. This is Sulfate adenylyltransferase subunit 2 (nodP) from Rhizobium sp. (strain BR816).